A 350-amino-acid polypeptide reads, in one-letter code: Small ribosomal subunit biogenesis GTPase RsgA (350 aa).

The tract at residues 1 to 30 (MSKRKLTQNQQRRIQSNNAKTLHRHQHRHK) is disordered. A compositionally biased stretch (polar residues) spans 7–20 (TQNQQRRIQSNNAK). Residues 21-30 (TLHRHQHRHK) show a composition bias toward basic residues. Residues 106-274 (HNQIVRPDYY…LIDSPGIREF (169 aa)) enclose the CP-type G domain. GTP-binding positions include 162 to 165 (NKAD) and 216 to 224 (GQSGVGKSS). The Zn(2+) site is built by Cys-298, Cys-303, His-305, and Cys-311.

The protein belongs to the TRAFAC class YlqF/YawG GTPase family. RsgA subfamily. Monomer. Associates with 30S ribosomal subunit, binds 16S rRNA. It depends on Zn(2+) as a cofactor.

Its subcellular location is the cytoplasm. Functionally, one of several proteins that assist in the late maturation steps of the functional core of the 30S ribosomal subunit. Helps release RbfA from mature subunits. May play a role in the assembly of ribosomal proteins into the subunit. Circularly permuted GTPase that catalyzes slow GTP hydrolysis, GTPase activity is stimulated by the 30S ribosomal subunit. The protein is Small ribosomal subunit biogenesis GTPase RsgA of Histophilus somni (strain 2336) (Haemophilus somnus).